A 593-amino-acid polypeptide reads, in one-letter code: Probable serine/threonine-protein kinase fhkA (593 aa).

The segment at 1-24 (MSQTNYIPSTPNKSTPPSELSSTP) is disordered. The FHA domain occupies 54–111 (ITIGRSKTCNIVVPELIVSGKHCIITRADAIENGNTNYGLLMIQDQSTNGTFINGKLI). The region spanning 180-472 (YDFIKELGSG…VEQALNHPWI (293 aa)) is the Protein kinase domain. ATP is bound by residues 186 to 194 (LGSGNFSVV) and K209. The active-site Proton acceptor is the D307.

The protein belongs to the protein kinase superfamily. CAMK Ser/Thr protein kinase family. CHK2 subfamily.

The enzyme catalyses L-seryl-[protein] + ATP = O-phospho-L-seryl-[protein] + ADP + H(+). It carries out the reaction L-threonyl-[protein] + ATP = O-phospho-L-threonyl-[protein] + ADP + H(+). In Dictyostelium discoideum (Social amoeba), this protein is Probable serine/threonine-protein kinase fhkA (fhkA).